Consider the following 385-residue polypeptide: Acetate kinase (385 aa).

Asn-8 is a binding site for Mg(2+). Lys-15 provides a ligand contact to ATP. Arg-85 contacts substrate. Asp-142 acts as the Proton donor/acceptor in catalysis. ATP contacts are provided by residues 200 to 204 (HLGNG), 275 to 277 (DMR), and 323 to 327 (GIGEN). Glu-373 lines the Mg(2+) pocket.

The protein belongs to the acetokinase family. In terms of assembly, homodimer. The cofactor is Mg(2+). It depends on Mn(2+) as a cofactor.

The protein resides in the cytoplasm. The catalysed reaction is acetate + ATP = acetyl phosphate + ADP. Its pathway is metabolic intermediate biosynthesis; acetyl-CoA biosynthesis; acetyl-CoA from acetate: step 1/2. Catalyzes the formation of acetyl phosphate from acetate and ATP. Can also catalyze the reverse reaction. This is Acetate kinase from Francisella tularensis subsp. holarctica (strain OSU18).